A 520-amino-acid polypeptide reads, in one-letter code: Developmental regulatory protein wetA (520 aa).

Disordered regions lie at residues 110 to 149 (ATHA…NERR), 260 to 294 (HPSS…SWQS), 388 to 453 (TTSQ…GSNK), and 471 to 496 (LTGV…RRRK). Over residues 261–294 (PSSSTLTNSSPSSADDMFSSSHSSDPHSLSSWQS) the composition is skewed to low complexity. Polar residues predominate over residues 388–401 (TTSQVHNVSRSPSL). The span at 420–429 (PVHRRTHSRK) shows a compositional bias: basic residues. Low complexity predominate over residues 436-453 (NAPKPAKASGSSSRGSNK).

This sequence belongs to the wetA family.

BrlA, abaA and wetA are pivotal regulators of conidiophore development and conidium maturation. They act individually and together to regulate their own expression and that of numerous other sporulation-specific genes. Plays a crucial role in pigmentation and conidial cell wall integrity. This is Developmental regulatory protein wetA from Penicillium digitatum (strain PHI26 / CECT 20796) (Green mold).